Reading from the N-terminus, the 376-residue chain is Queuine tRNA-ribosyltransferase (376 aa).

Catalysis depends on Asp93, which acts as the Proton acceptor. Substrate is bound by residues 93–97 (DSGGF), Asp147, Gln190, and Gly217. Residues 248–254 (GVGTPDD) are RNA binding. The active-site Nucleophile is the Asp267. An RNA binding; important for wobble base 34 recognition region spans residues 272 to 276 (TRSGR).

This sequence belongs to the queuine tRNA-ribosyltransferase family. As to quaternary structure, homodimer. Within each dimer, one monomer is responsible for RNA recognition and catalysis, while the other monomer binds to the replacement base PreQ1.

It catalyses the reaction 7-aminomethyl-7-carbaguanine + guanosine(34) in tRNA = 7-aminomethyl-7-carbaguanosine(34) in tRNA + guanine. The protein operates within tRNA modification; tRNA-queuosine biosynthesis. Its function is as follows. Catalyzes the base-exchange of a guanine (G) residue with the queuine precursor 7-aminomethyl-7-deazaguanine (PreQ1) at position 34 (anticodon wobble position) in tRNAs with GU(N) anticodons (tRNA-Asp, -Asn, -His and -Tyr). Catalysis occurs through a double-displacement mechanism. The nucleophile active site attacks the C1' of nucleotide 34 to detach the guanine base from the RNA, forming a covalent enzyme-RNA intermediate. The proton acceptor active site deprotonates the incoming PreQ1, allowing a nucleophilic attack on the C1' of the ribose to form the product. After dissociation, two additional enzymatic reactions on the tRNA convert PreQ1 to queuine (Q), resulting in the hypermodified nucleoside queuosine (7-(((4,5-cis-dihydroxy-2-cyclopenten-1-yl)amino)methyl)-7-deazaguanosine). This chain is Queuine tRNA-ribosyltransferase, found in Rhizobium meliloti (strain 1021) (Ensifer meliloti).